The sequence spans 457 residues: Putative adhesion G protein-coupled receptor E4P (457 aa).

The N-terminal stretch at 1-14 is a signal peptide; it reads MGSRFLLVLLSGAS. Disulfide bonds link C15–C24, C18–C30, C32–C52, C58–C71, C65–C80, and C82–C103. One can recognise an EGF-like 1 domain in the interval 15–53; the sequence is CPPCPKYASCHNSTHCTCEDGFRARSGRTYFHDSSEKCE. At 16–191 the chain is on the extracellular side; that stretch reads PPCPKYASCH…LAPKEDPVLT (176 aa). N26 carries N-linked (GlcNAc...) asparagine glycosylation. Positions 54-104 constitute an EGF-like 2; calcium-binding domain; sequence DINECETGLAKCKYKAYCRNKVGGYICSCLVKYTLFNFLAGIIDYDHPDCY. N106 and N162 each carry an N-linked (GlcNAc...) asparagine glycan. Positions 134 to 186 constitute a GAIN-B domain; it reads DKRTKHICVYWEGSEGGWSTEGCSHVHSNGSYTKCKCFHLSSFAVLVALAPKE. 2 disulfides stabilise this stretch: C141-C168 and C156-C170. Positions 141-186 are GPS; it reads CVYWEGSEGGWSTEGCSHVHSNGSYTKCKCFHLSSFAVLVALAPKE. Residues 192–212 form a helical membrane-spanning segment; it reads VITQVGLTISLLCLFLAILTF. The Cytoplasmic portion of the chain corresponds to 213 to 223; it reads LLCRPIQNTST. A helical transmembrane segment spans residues 224–244; sequence SLHLELSLCLFLAHLLFLTGI. The N-linked (GlcNAc...) asparagine glycan is linked to N245. Over 245–250 the chain is Extracellular; sequence NRTEPE. Residues 251-271 form a helical membrane-spanning segment; sequence VLCSIIAGLLHFLYLACFTWM. The Cytoplasmic segment spans residues 272–299; it reads LLEGLHLFLTVRNLKVANYTSTGRFKKR. The helical transmembrane segment at 300 to 320 threads the bilayer; that stretch reads FMYPVGYGIPAVIIAVSAIVG. At 321 to 336 the chain is on the extracellular side; sequence PQNYGTFTCWLKLDKG. The chain crosses the membrane as a helical span at residues 337 to 357; that stretch reads FIWSFMGPVAVIILINLVFYF. Topologically, residues 358–384 are cytoplasmic; the sequence is QVLWILRSKLSSLNKEVSTIQDTRVMT. The chain crosses the membrane as a helical span at residues 385 to 405; that stretch reads FKAISQLFILGCSWGLGFFMV. Topologically, residues 406–413 are extracellular; sequence EEVGKTIG. Residues 414–434 traverse the membrane as a helical segment; sequence SIIAYSFTIINTLQGVLLFVV. Residues 435–457 lie on the Cytoplasmic side of the membrane; it reads HCLLNRQVRLIILSVISLVPKSN.

The protein belongs to the G-protein coupled receptor 2 family. Adhesion G-protein coupled receptor (ADGR) subfamily. As to quaternary structure, forms a heterodimer, consisting of a large extracellular region (alpha subunit) non-covalently linked to a seven-transmembrane moiety (beta subunit). Post-translationally, glycosylated. In terms of processing, proteolytically cleaved into 2 subunits, an extracellular alpha subunit and a seven-transmembrane subunit.

The protein localises to the cell membrane. Its subcellular location is the secreted. May mediate the cellular interaction between myeloid cells and B-cells. This is Putative adhesion G protein-coupled receptor E4P from Homo sapiens (Human).